The sequence spans 151 residues: Endoribonuclease YbeY (151 aa).

Residues His-108, His-112, and Asp-118 each contribute to the Zn(2+) site.

The protein belongs to the endoribonuclease YbeY family. Zn(2+) is required as a cofactor.

The protein localises to the cytoplasm. Functionally, single strand-specific metallo-endoribonuclease involved in late-stage 70S ribosome quality control and in maturation of the 3' terminus of the 16S rRNA. The protein is Endoribonuclease YbeY of Porphyromonas gingivalis (strain ATCC BAA-308 / W83).